The primary structure comprises 351 residues: Dihydroorotate dehydrogenase (quinone) (351 aa).

FMN-binding positions include 61-65 and Thr85; that span reads AGLDK. Substrate is bound at residue Lys65. A substrate-binding site is contributed by 110 to 114; that stretch reads NRMGF. 2 residues coordinate FMN: Asn139 and Asn172. Asn172 is a binding site for substrate. Ser175 acts as the Nucleophile in catalysis. Substrate is bound at residue Asn177. FMN-binding residues include Lys217 and Thr245. 246-247 contacts substrate; that stretch reads NT. FMN is bound by residues Gly268, Gly297, and 318–319; that span reads YT.

The protein belongs to the dihydroorotate dehydrogenase family. Type 2 subfamily. Monomer. Requires FMN as cofactor.

The protein resides in the cell membrane. The catalysed reaction is (S)-dihydroorotate + a quinone = orotate + a quinol. The protein operates within pyrimidine metabolism; UMP biosynthesis via de novo pathway; orotate from (S)-dihydroorotate (quinone route): step 1/1. Functionally, catalyzes the conversion of dihydroorotate to orotate with quinone as electron acceptor. This is Dihydroorotate dehydrogenase (quinone) from Xylella fastidiosa (strain M23).